Here is a 236-residue protein sequence, read N- to C-terminus: UPF0502 protein Bpro_3844 (236 aa).

Belongs to the UPF0502 family.

This Polaromonas sp. (strain JS666 / ATCC BAA-500) protein is UPF0502 protein Bpro_3844.